The chain runs to 59 residues: Large ribosomal subunit protein uL30 (59 aa).

Belongs to the universal ribosomal protein uL30 family. In terms of assembly, part of the 50S ribosomal subunit.

The chain is Large ribosomal subunit protein uL30 from Alteromonas mediterranea (strain DSM 17117 / CIP 110805 / LMG 28347 / Deep ecotype).